Here is a 360-residue protein sequence, read N- to C-terminus: Arginase, non-hepatic 3 (360 aa).

Mn(2+)-binding residues include H122, D145, H147, and D149. Substrate-binding positions include 147–151 (HADIN), 158–160 (SGN), and D204. Mn(2+) contacts are provided by D253 and D255. Positions 267 and 298 each coordinate substrate.

It belongs to the arginase family. Homotrimer. Requires Mn(2+) as cofactor. Expressed at differing tadpole stages in tail, intestine, hindlimb and trunk region. Strongest in tadpole tail.

It carries out the reaction L-arginine + H2O = urea + L-ornithine. The protein operates within nitrogen metabolism; urea cycle; L-ornithine and urea from L-arginine: step 1/1. As well as its role in the urea cycle, may be involved in tissue remodeling. The sequence is that of Arginase, non-hepatic 3 (arg2-c) from Xenopus laevis (African clawed frog).